Reading from the N-terminus, the 574-residue chain is K(+)/H(+) antiporter NhaP2 (574 aa).

Helical transmembrane passes span 6 to 26, 34 to 54, 58 to 78, 87 to 107, 109 to 129, 173 to 193, 196 to 216, 219 to 239, 242 to 262, 271 to 291, 299 to 319, 335 to 355, and 359 to 379; these read INSF…LSPV, ILLI…GGIL, YSTA…DGGM, VALW…TSIT, VMAA…GAIV, IAIL…ISFI, FGLG…LVNL, LAEG…YAAS, LGGS…NKPT, VLDG…GLLL, IWLP…PLAV, WFIS…VFPM, and LPGA…SLLV. The region spanning 405 to 486 is the RCK C-terminal domain; that stretch reads SGVEIYPSSE…LEALSNLFSQ (82 aa).

It belongs to the monovalent cation:proton antiporter 1 (CPA1) transporter (TC 2.A.36) family. NhaP2 subfamily.

The protein localises to the cell inner membrane. The catalysed reaction is K(+)(in) + H(+)(out) = K(+)(out) + H(+)(in). Functionally, k(+)/H(+) antiporter that extrudes potassium in exchange for external protons and maintains the internal concentration of potassium under toxic levels. The sequence is that of K(+)/H(+) antiporter NhaP2 from Shewanella sp. (strain MR-7).